The sequence spans 369 residues: Queuine tRNA-ribosyltransferase (369 aa).

Aspartate 89 (proton acceptor) is an active-site residue. Residues 89-93 (DSGGF), aspartate 142, glutamine 184, and glycine 211 contribute to the substrate site. Residues 242-248 (GGGSPEL) are RNA binding. The active-site Nucleophile is aspartate 261. An RNA binding; important for wobble base 34 recognition region spans residues 266–270 (TRIAR). Residues cysteine 299, cysteine 301, cysteine 304, and histidine 330 each contribute to the Zn(2+) site.

Belongs to the queuine tRNA-ribosyltransferase family. Homodimer. Within each dimer, one monomer is responsible for RNA recognition and catalysis, while the other monomer binds to the replacement base PreQ1. Zn(2+) is required as a cofactor.

It catalyses the reaction 7-aminomethyl-7-carbaguanine + guanosine(34) in tRNA = 7-aminomethyl-7-carbaguanosine(34) in tRNA + guanine. The protein operates within tRNA modification; tRNA-queuosine biosynthesis. Functionally, catalyzes the base-exchange of a guanine (G) residue with the queuine precursor 7-aminomethyl-7-deazaguanine (PreQ1) at position 34 (anticodon wobble position) in tRNAs with GU(N) anticodons (tRNA-Asp, -Asn, -His and -Tyr). Catalysis occurs through a double-displacement mechanism. The nucleophile active site attacks the C1' of nucleotide 34 to detach the guanine base from the RNA, forming a covalent enzyme-RNA intermediate. The proton acceptor active site deprotonates the incoming PreQ1, allowing a nucleophilic attack on the C1' of the ribose to form the product. After dissociation, two additional enzymatic reactions on the tRNA convert PreQ1 to queuine (Q), resulting in the hypermodified nucleoside queuosine (7-(((4,5-cis-dihydroxy-2-cyclopenten-1-yl)amino)methyl)-7-deazaguanosine). This is Queuine tRNA-ribosyltransferase from Thermotoga maritima (strain ATCC 43589 / DSM 3109 / JCM 10099 / NBRC 100826 / MSB8).